A 139-amino-acid polypeptide reads, in one-letter code: MHRSTLPKYARVLKRKQFLYISRAGSHCQGSQVIFHVAPSRYSGCCKLGITVSKKFGKAHKRNYFKRIVREAFRKKRHSLPACQIVVMPKNKQQPKFEDLLQDFAQQIPEALSSKLAKNKPTTGVEYSPKNEKCESVLP.

The tract at residues 120–139 (KPTTGVEYSPKNEKCESVLP) is disordered. Positions 129–139 (PKNEKCESVLP) are enriched in basic and acidic residues.

Belongs to the RnpA family. Consists of a catalytic RNA component (M1 or rnpB) and a protein subunit.

It catalyses the reaction Endonucleolytic cleavage of RNA, removing 5'-extranucleotides from tRNA precursor.. Functionally, RNaseP catalyzes the removal of the 5'-leader sequence from pre-tRNA to produce the mature 5'-terminus. It can also cleave other RNA substrates such as 4.5S RNA. The protein component plays an auxiliary but essential role in vivo by binding to the 5'-leader sequence and broadening the substrate specificity of the ribozyme. This is Ribonuclease P protein component from Chlamydia caviae (strain ATCC VR-813 / DSM 19441 / 03DC25 / GPIC) (Chlamydophila caviae).